A 473-amino-acid chain; its full sequence is Photosystem II CP43 reaction center protein (473 aa).

The propeptide occupies 1–14; the sequence is MKTLYSLRRSYPVE. Position 15 is an N-acetylthreonine (Thr-15). Thr-15 is subject to Phosphothreonine. The next 5 membrane-spanning stretches (helical) occupy residues 69–93, 134–155, 178–200, 255–275, and 291–312; these read LFEV…PHLA, LIGP…KDRN, KALY…RKIT, KPFA…LSYS, and WFNN…ASQA. Position 367 (Glu-367) interacts with [CaMn4O5] cluster. A helical membrane pass occupies residues 447–471; that stretch reads RARAAAAGFEKGIDRDFEPVLSMTP.

This sequence belongs to the PsbB/PsbC family. PsbC subfamily. PSII is composed of 1 copy each of membrane proteins PsbA, PsbB, PsbC, PsbD, PsbE, PsbF, PsbH, PsbI, PsbJ, PsbK, PsbL, PsbM, PsbT, PsbX, PsbY, PsbZ, Psb30/Ycf12, at least 3 peripheral proteins of the oxygen-evolving complex and a large number of cofactors. It forms dimeric complexes. The cofactor is Binds multiple chlorophylls and provides some of the ligands for the Ca-4Mn-5O cluster of the oxygen-evolving complex. It may also provide a ligand for a Cl- that is required for oxygen evolution. PSII binds additional chlorophylls, carotenoids and specific lipids..

It is found in the plastid. The protein localises to the chloroplast thylakoid membrane. Its function is as follows. One of the components of the core complex of photosystem II (PSII). It binds chlorophyll and helps catalyze the primary light-induced photochemical processes of PSII. PSII is a light-driven water:plastoquinone oxidoreductase, using light energy to abstract electrons from H(2)O, generating O(2) and a proton gradient subsequently used for ATP formation. The sequence is that of Photosystem II CP43 reaction center protein from Pinus thunbergii (Japanese black pine).